Reading from the N-terminus, the 367-residue chain is MKSFFILLSILQECYGKDIVARIGGRNVAEKIGGARHRRQVLIRGSDEERRHKWFNNTVHYYFYEENFDFTVKESILRAMELISNHTCIKFSTEPSEKSIRMESDSTTIACYAEIGQVRENQLFSFNSDCYSAGVAVHELIHSLGFIHAHQRSDRDQYLEFKKNLDELNQTYQEQYKIWEYQEILVPYDVGSVMQYPNEEDEEYYPVRKYRTMANTMGSAIVAFYDYLMINKYYECSCANNLSCKNHGYPNPSNCSQCNCPYGFGGADCSQRAEPGATFQATETWQNVTISLDAGYRYLENNQKLPQVDFIYQFLWIMAPANKTTQIRVEKFVEGKCLPGCIRGGVEIKTNEDPRLTSPRLCCEETS.

A signal peptide spans M1 to G16. Positions V41–S237 constitute a Peptidase M12A domain. N56 and N85 each carry an N-linked (GlcNAc...) asparagine glycan. Disulfide bonds link C88–C236, C111–C130, C238–C258, and C260–C269. H138 is a binding site for Zn(2+). The active site involves E139. Residues H142 and H148 each contribute to the Zn(2+) site. Residues N169, N241, and N254 are each glycosylated (N-linked (GlcNAc...) asparagine). Residues K232–S270 form the EGF-like domain. Residues N287 and N322 are each glycosylated (N-linked (GlcNAc...) asparagine).

The cofactor is Zn(2+). As to expression, expressed in uterine seam (utse) cell.

It is found in the secreted. Metalloprotease. In Caenorhabditis elegans, this protein is Zinc metalloproteinase nas-22 (nas-22).